We begin with the raw amino-acid sequence, 636 residues long: Tumor protein p73 (636 aa).

Positions 1 to 46 (MAQSTATSPDGGTTFEHLWSSLEPDSTYFDLPQSSRGNNEVVGGTD) are transactivation. Phosphothreonine; by PLK1 is present on Thr27. At Tyr28 the chain carries Phosphotyrosine; by SRC and HCK. A disordered region spans residues 78-104 (RAASASPYTPEHAASVPTHSPYAQPSS). The segment covering 94–104 (PTHSPYAQPSS) has biased composition (polar residues). Tyr99 carries the post-translational modification Phosphotyrosine; by ABL1. Positions 131–310 (FQQSSTAKSA…DRKADEDHYR (180 aa)) are DNA-binding. Zn(2+) is bound by residues Cys194, His197, Cys258, and Cys262. The disordered stretch occupies residues 314–345 (ALNESSAKNGAASKRAFKQSPPAVPALGAGVK). The interval 345-380 (KKRRHGDEDTYYLQVRGRENFEILMKLKESLELMEL) is interaction with HIPK2. The interval 345–386 (KKRRHGDEDTYYLQVRGRENFEILMKLKESLELMELVPQPLV) is oligomerization. Positions 483-487 (PPPPY) match the PPxY motif motif. An SAM domain is found at 485 to 551 (PPYHADPSLV…WRGLQDLKQG (67 aa)). Lys627 is covalently cross-linked (Glycyl lysine isopeptide (Lys-Gly) (interchain with G-Cter in SUMO); in isoform Alpha). A Glycyl lysine isopeptide (Lys-Gly) (interchain with G-Cter in SUMO2) cross-link involves residue Lys627.

This sequence belongs to the p53 family. As to quaternary structure, found in a complex with p53/TP53 and CABLES1. The C-terminal oligomerization domain binds to the ABL1 tyrosine kinase SH3 domain. Interacts with HECW2. Isoform Beta interacts homotypically and with p53/TP53, whereas isoform Alpha does not. Isoform Gamma interacts homotypically and with all p73 isoforms. Isoform Delta interacts with isoform Gamma, isoform Alpha, and homotypically. Isoforms Alpha and Beta interact with HIPK2. Isoform Alpha interacts with RANBP9. Isoform Beta interacts with WWOX. Interacts (via SAM domain) with FBXO45 (via B30.2/SPRY domain). Interacts with YAP1 (phosphorylated form). Interacts with HCK (via SH3 domain); this inhibits TP73 activity and degradation. Interacts (via SAM domain) with NQO1; this interaction is NADH-dependent, stabilizes TP73 in response to oxidative stress and protects it from ubiquitin-independent degradation by the 20S proteasome. (Microbial infection) Interacts with Epstein-Barr virus protein EBNA6; this interaction inhibits TP73-mediated apoptotic pathway. It depends on Zn(2+) as a cofactor. Isoform alpha (but not isoform beta) is sumoylated on Lys-627, which potentiates proteasomal degradation but does not affect transcriptional activity. Phosphorylation by PLK1 and PLK3 inhibits the transcription regulator activity and pro-apoptotic function. Post-translationally, higher levels of phosphorylation seen in the brain from patients with Huntington disease. In terms of processing, polyubiquitinated by RCHY1/PIRH2; leading to its degradation by the proteasome. In terms of tissue distribution, expressed in striatal neurons of patients with Huntington disease (at protein level). Brain, kidney, placenta, colon, heart, liver, spleen, skeletal muscle, prostate, thymus and pancreas. Highly expressed in fetal tissue. Expressed in the respiratory epithelium.

It is found in the nucleus. Its subcellular location is the cytoplasm. Functionally, participates in the apoptotic response to DNA damage. Isoforms containing the transactivation domain are pro-apoptotic, isoforms lacking the domain are anti-apoptotic and block the function of p53 and transactivating p73 isoforms. May be a tumor suppressor protein. Is an activator of FOXJ1 expression. It is an essential factor for the positive regulation of lung ciliated cell differentiation. This chain is Tumor protein p73 (TP73), found in Homo sapiens (Human).